Reading from the N-terminus, the 154-residue chain is Crossover junction endodeoxyribonuclease RuvC (154 aa).

Residues D7, E67, and D139 contribute to the active site. Positions 7, 67, and 139 each coordinate Mg(2+).

The protein belongs to the RuvC family. As to quaternary structure, homodimer which binds Holliday junction (HJ) DNA. The HJ becomes 2-fold symmetrical on binding to RuvC with unstacked arms; it has a different conformation from HJ DNA in complex with RuvA. In the full resolvosome a probable DNA-RuvA(4)-RuvB(12)-RuvC(2) complex forms which resolves the HJ. Mg(2+) serves as cofactor.

It localises to the cytoplasm. It catalyses the reaction Endonucleolytic cleavage at a junction such as a reciprocal single-stranded crossover between two homologous DNA duplexes (Holliday junction).. Functionally, the RuvA-RuvB-RuvC complex processes Holliday junction (HJ) DNA during genetic recombination and DNA repair. Endonuclease that resolves HJ intermediates. Cleaves cruciform DNA by making single-stranded nicks across the HJ at symmetrical positions within the homologous arms, yielding a 5'-phosphate and a 3'-hydroxyl group; requires a central core of homology in the junction. The consensus cleavage sequence is 5'-(A/T)TT(C/G)-3'. Cleavage occurs on the 3'-side of the TT dinucleotide at the point of strand exchange. HJ branch migration catalyzed by RuvA-RuvB allows RuvC to scan DNA until it finds its consensus sequence, where it cleaves and resolves the cruciform DNA. The polypeptide is Crossover junction endodeoxyribonuclease RuvC (Prochlorococcus marinus (strain MIT 9303)).